The sequence spans 125 residues: Class III hydrophobin G (125 aa).

The first 20 residues, 1–20 (MKPSIVTFLMLAAVTAAVSA), serve as a signal peptide directing secretion. 4 disulfides stabilise this stretch: Cys54–Cys107, Cys60–Cys101, Cys61–Cys94, and Cys108–Cys122.

It belongs to the fungal hydrophobin family. As to quaternary structure, self-assembles to form functional amyloid fibrils called rodlets. Self-assembly into fibrillar rodlets occurs spontaneously at hydrophobic:hydrophilic interfaces and the rodlets further associate laterally to form amphipathic monolayers.

It localises to the secreted. The protein resides in the cell wall. In terms of biological role, aerial growth, conidiation, and dispersal of filamentous fungi in the environment rely upon a capability of their secreting small amphipathic proteins called hydrophobins (HPBs) with low sequence identity. Class I can self-assemble into an outermost layer of rodlet bundles on aerial cell surfaces, conferring cellular hydrophobicity that supports fungal growth, development and dispersal; whereas Class II form highly ordered films at water-air interfaces through intermolecular interactions but contribute nothing to the rodlet structure. RodF and rodG belong to Class III, which contains hydrophobins with intermediate (between classes I and II) or atypical characteristics. RodG, unlike rodA, is not required for rodlet formation. This Aspergillus fumigatus (strain ATCC MYA-4609 / CBS 101355 / FGSC A1100 / Af293) (Neosartorya fumigata) protein is Class III hydrophobin G.